Reading from the N-terminus, the 300-residue chain is Cation-efflux pump FieF (300 aa).

The next 4 membrane-spanning stretches (helical) occupy residues 12–32, 39–59, 82–102, and 114–134; these read AAIA…FAWW, ILAA…NLLV, AALA…LTSI, and PGVG…LVTF. Zn(2+) contacts are provided by Asp45 and Asp49. The Zn(2+) site is built by His153 and Asp157. 2 helical membrane-spanning segments follow: residues 156 to 176 and 178 to 198; these read SDVM…YGWH and ADAL…LRMG.

This sequence belongs to the cation diffusion facilitator (CDF) transporter (TC 2.A.4) family. FieF subfamily. As to quaternary structure, homodimer.

The protein resides in the cell inner membrane. It catalyses the reaction Zn(2+)(in) + H(+)(out) = Zn(2+)(out) + H(+)(in). The enzyme catalyses Cd(2+)(in) + H(+)(out) = Cd(2+)(out) + H(+)(in). It carries out the reaction Fe(2+)(in) + H(+)(out) = Fe(2+)(out) + H(+)(in). Its function is as follows. Divalent metal cation transporter which exports Zn(2+), Cd(2+) and possibly Fe(2+). May be involved in zinc and iron detoxification by efflux. The protein is Cation-efflux pump FieF of Salmonella arizonae (strain ATCC BAA-731 / CDC346-86 / RSK2980).